A 250-amino-acid polypeptide reads, in one-letter code: Myelin basic protein (250 aa).

Residues 1–28 (MGNHSGKRELSAEKASKDGEIHRGEAGK) are compositionally biased toward basic and acidic residues. A disordered region spans residues 1 to 150 (MGNHSGKREL…SQRSKYLATA (150 aa)). G2 is subject to N-acetylalanine. Phosphoserine occurs at positions 31 and 40. Positions 95 to 113 (FSRDAPGREDNTFKDRPSE) are enriched in basic and acidic residues. Phosphothreonine is present on S96. E113 carries the post-translational modification Phosphoserine. E122 bears the Phosphothreonine mark. T125 carries the post-translational modification Phosphotyrosine. A135, R139, S141, and S144 each carry phosphoserine. Phosphotyrosine is present on residues Y146 and L147. T149 is subject to Phosphothreonine. S151 is modified (phosphoserine). S151 is modified (phosphotyrosine). T152 is modified (phosphothreonine). A citrulline mark is found at R157 and R163. Phosphothreonine is present on T167. Residue S172 is modified to Phosphoserine. R175 and R181 each carry omega-N-methylarginine. The interval 175-250 (RFFSGDRGAP…SRSGSPMARR (76 aa)) is disordered. S188 bears the Phosphoserine mark. At T197 the chain carries Phosphothreonine. Residues 197–206 (THYGSLPQKS) show a composition bias toward polar residues. The residue at position 199 (Y199) is a Phosphotyrosine. S206 carries the post-translational modification Phosphoserine. Phosphothreonine occurs at positions 211, 226, and 229. Q234 is modified (deamidated glutamine). Citrulline is present on R239. Residue S241 is modified to Phosphoserine. S245 is subject to Phosphoserine; by UHMK1. At R250 the chain carries Citrulline.

The protein belongs to the myelin basic protein family. In terms of assembly, homodimer. As in other animals, several charge isomers may be produced as a result of optional post-translational modifications, such as phosphorylation of serine or threonine residues, deamidation of glutamine or asparagine residues, citrullination and methylation of arginine residues. In terms of processing, methylated on arginine residues; decreases with the age of the animal, making MBP more cationic. Post-translationally, phosphorylated by TAOK2, VRK2, MAPK11, MAPK12, MAPK14 and MINK1. Proteolytically cleaved in B cell lysosomes by cathepsin CTSG which degrades the major immunogenic MBP epitope and prevents the activation of MBP-specific autoreactive T cells. In terms of tissue distribution, in the embryo, isoform 1-isoform 3 are found in neurons within the central nervous system (primarily in pioneer neurons important in the formation of the cortex) and the peripheral nervous system. They are also expressed in the thymus, gut, lung and kidney. In the adult, isoform 1-isoform 3 are highly expressed in the brain (mainly in brain regions rich in oligodendrocytes) and spleen. Lower levels are seen in the heart, kidney and lung. Isoform 2 is also found in cells of the immune system. The isoforms missing the 134 first amino acids (isoform 4-isoform 13) are almost exclusively produced in the myelin-forming cells, the mature oligodendrocytes.

It is found in the myelin membrane. It localises to the cytoplasm. The protein resides in the nucleus. Functionally, the classic group of MBP isoforms (isoform 4-isoform 13) are with PLP the most abundant protein components of the myelin membrane in the CNS. They have a role in both its formation and stabilization. The non-classic group of MBP isoforms (isoform 1-isoform 3/Golli-MBPs) may preferentially have a role in the early developing brain long before myelination, maybe as components of transcriptional complexes, and may also be involved in signaling pathways in T-cells and neural cells. Differential splicing events combined to optional post-translational modifications give a wide spectrum of isomers, with each of them potentially having a specialized function. The polypeptide is Myelin basic protein (Mbp) (Mus musculus (Mouse)).